Reading from the N-terminus, the 354-residue chain is UDP-3-O-acylglucosamine N-acyltransferase (354 aa).

The Proton acceptor role is filled by His245.

Belongs to the transferase hexapeptide repeat family. LpxD subfamily. Homotrimer.

It catalyses the reaction a UDP-3-O-[(3R)-3-hydroxyacyl]-alpha-D-glucosamine + a (3R)-hydroxyacyl-[ACP] = a UDP-2-N,3-O-bis[(3R)-3-hydroxyacyl]-alpha-D-glucosamine + holo-[ACP] + H(+). The protein operates within bacterial outer membrane biogenesis; LPS lipid A biosynthesis. Its function is as follows. Catalyzes the N-acylation of UDP-3-O-acylglucosamine using 3-hydroxyacyl-ACP as the acyl donor. Is involved in the biosynthesis of lipid A, a phosphorylated glycolipid that anchors the lipopolysaccharide to the outer membrane of the cell. This Anaeromyxobacter sp. (strain K) protein is UDP-3-O-acylglucosamine N-acyltransferase.